Consider the following 612-residue polypeptide: Coagulation factor X-activating enzyme heavy chain (612 aa).

Positions M1 to S20 are cleaved as a signal peptide. Residues I21–S193 constitute a propeptide, or 194. Positions T201–P395 constitute a Peptidase M12B domain. E204 is a binding site for Ca(2+). Residue N259 is glycosylated (N-linked (GlcNAc...) asparagine). D286 provides a ligand contact to Ca(2+). 3 disulfide bridges follow: C310/C390, C350/C374, and C352/C357. H335 provides a ligand contact to Zn(2+). E336 is an active-site residue. Residues H339 and H345 each coordinate Zn(2+). N-linked (GlcNAc...) asparagine glycosylation is found at N353 and N373. Positions 390, 393, 405, 408, 412, 415, and 418 each coordinate Ca(2+). One can recognise a Disintegrin domain in the interval P403–N489. Cysteines 461 and 481 form a disulfide. Positions E467–D469 match the D/ECD-tripeptide motif.

This sequence belongs to the venom metalloproteinase (M12B) family. P-III subfamily. P-IIId sub-subfamily. As to quaternary structure, heterotrimer; disulfide-linked. The heterotrimer consists of 1 heavy chain and 2 light chains (lectins): LC1 and LC2 (AC Q7T045 and AC Q696W1). Requires Zn(2+) as cofactor. Post-translationally, N-glycosylated. Contains 8.0% of hexoses, 2.5% of hexosamines and 2.5% of sialic acids. Expressed by the venom gland.

The protein resides in the secreted. The enzyme catalyses Specifically activates several components of the blood clotting system, including coagulation factor X, coagulation factor IX and protein C by cleavage of Arg-|-Xaa bonds. Has no action on insulin B chain.. With respect to regulation, calcium is required for the activity of the heterotrimer. Functionally, catalytic subunit of blood coagulation factor X-activating enzyme. Activates coagulation factor X (F10) by cleaving the Arg(234)-Ile(235) bond, activates coagulation factor IX (F9) by cleaving the Arg(226)-Val(227) bond and is also able to activate protein C (PROC). The chain is Coagulation factor X-activating enzyme heavy chain from Macrovipera lebetinus (Levantine viper).